The chain runs to 416 residues: Glutamyl-tRNA reductase (416 aa).

Substrate contacts are provided by residues 49–52 (TCNR), serine 105, 110–112 (EPQ), and glutamine 116. Cysteine 50 functions as the Nucleophile in the catalytic mechanism. An NADP(+)-binding site is contributed by 185 to 190 (GAGEMI).

Belongs to the glutamyl-tRNA reductase family. As to quaternary structure, homodimer.

It catalyses the reaction (S)-4-amino-5-oxopentanoate + tRNA(Glu) + NADP(+) = L-glutamyl-tRNA(Glu) + NADPH + H(+). It functions in the pathway porphyrin-containing compound metabolism; protoporphyrin-IX biosynthesis; 5-aminolevulinate from L-glutamyl-tRNA(Glu): step 1/2. In terms of biological role, catalyzes the NADPH-dependent reduction of glutamyl-tRNA(Glu) to glutamate 1-semialdehyde (GSA). This is Glutamyl-tRNA reductase from Nitrosomonas europaea (strain ATCC 19718 / CIP 103999 / KCTC 2705 / NBRC 14298).